A 112-amino-acid polypeptide reads, in one-letter code: MKKIEAIIKPFKLDEVKEALHEVGIKGITVTEAKGFGRQKGHTELYRGAEYVVDFLPKVKIEVVMEDSLVERAIEAIQQAAHTGRIGDGKIFVTPVEEVVRIRTGEKGGDAI.

Tyr-51 carries the post-translational modification O-UMP-tyrosine.

It belongs to the P(II) protein family. As to quaternary structure, homotrimer.

In nitrogen-limiting conditions, when the ratio of Gln to 2-ketoglutarate decreases, P-II is uridylylated to P-II-UMP. P-II-UMP allows the deadenylation of glutamine synthetase (GS), thus activating the enzyme. Conversely, in nitrogen excess P-II is deuridylated and promotes the adenylation of GS. P-II indirectly controls the transcription of the GS gene (glnA). P-II prevents NR-II-catalyzed conversion of NR-I to NR-I-phosphate, the transcriptional activator of glnA. When P-II is uridylylated to P-II-UMP, these events are reversed. This chain is Nitrogen regulatory protein P-II (glnB), found in Azospirillum brasilense.